A 493-amino-acid chain; its full sequence is Lysine--tRNA ligase (493 aa).

A 'HIGH' region motif is present at residues 26-34 (PSGHIHLGN). Positions 270–274 (AMKSS) match the 'KMSKS' region motif.

The protein belongs to the class-I aminoacyl-tRNA synthetase family.

Its subcellular location is the cytoplasm. It catalyses the reaction tRNA(Lys) + L-lysine + ATP = L-lysyl-tRNA(Lys) + AMP + diphosphate. In Archaeoglobus fulgidus (strain ATCC 49558 / DSM 4304 / JCM 9628 / NBRC 100126 / VC-16), this protein is Lysine--tRNA ligase (lysS).